We begin with the raw amino-acid sequence, 183 residues long: Large ribosomal subunit protein uL6 (183 aa).

This sequence belongs to the universal ribosomal protein uL6 family. In terms of assembly, part of the 50S ribosomal subunit.

Its function is as follows. This protein binds to the 23S rRNA, and is important in its secondary structure. It is located near the subunit interface in the base of the L7/L12 stalk, and near the tRNA binding site of the peptidyltransferase center. The chain is Large ribosomal subunit protein uL6 from Porphyromonas gingivalis (strain ATCC 33277 / DSM 20709 / CIP 103683 / JCM 12257 / NCTC 11834 / 2561).